A 315-amino-acid polypeptide reads, in one-letter code: NADH-cytochrome b5 reductase-like (315 aa).

The region spanning 19-55 is the Oxidoreductase-like domain; that stretch reads RPTEPLPSQCCGSGCSPCVFDLYHRDLARWEAAQASK. In terms of domain architecture, FAD-binding FR-type spans 75 to 177; it reads ETFVAFCIIA…RGPFGDFFYK (103 aa). FAD contacts are provided by residues 157–172 and 182–214; these read ESWRVGDTAFWRGPFG and GELLLLAAGTGLAPMVPILQSITDNENDETFVT.

It belongs to the flavoprotein pyridine nucleotide cytochrome reductase family. The cofactor is FAD.

The enzyme catalyses 2 Fe(III)-[cytochrome b5] + NADH = 2 Fe(II)-[cytochrome b5] + NAD(+) + H(+). NADH-cytochrome b5 reductases are involved in desaturation and elongation of fatty acids, cholesterol biosynthesis, drug metabolism, and, in erythrocyte, methemoglobin reduction. The polypeptide is NADH-cytochrome b5 reductase-like (CYB5RL) (Homo sapiens (Human)).